The following is a 427-amino-acid chain: Glutamate-1-semialdehyde 2,1-aminomutase (427 aa).

K267 bears the N6-(pyridoxal phosphate)lysine mark.

It belongs to the class-III pyridoxal-phosphate-dependent aminotransferase family. HemL subfamily. Homodimer. The cofactor is pyridoxal 5'-phosphate.

It localises to the cytoplasm. The catalysed reaction is (S)-4-amino-5-oxopentanoate = 5-aminolevulinate. The protein operates within porphyrin-containing compound metabolism; protoporphyrin-IX biosynthesis; 5-aminolevulinate from L-glutamyl-tRNA(Glu): step 2/2. This chain is Glutamate-1-semialdehyde 2,1-aminomutase, found in Sulfurihydrogenibium azorense (strain DSM 15241 / OCM 825 / Az-Fu1).